The following is a 216-amino-acid chain: Alanyl-tRNA editing protein AlaX-M (216 aa).

3 residues coordinate Zn(2+): His-99, His-103, and Cys-182.

Belongs to the class-II aminoacyl-tRNA synthetase family. Editing domain AlaX-M subfamily. As to quaternary structure, monomer. It depends on Zn(2+) as a cofactor.

The protein resides in the cytoplasm. Its function is as follows. Functions in trans to edit the amino acid moiety from mischarged charged Gly-tRNA(Ala) and Ser-tRNA(Ala). This is Alanyl-tRNA editing protein AlaX-M (alaXM) from Pyrococcus horikoshii (strain ATCC 700860 / DSM 12428 / JCM 9974 / NBRC 100139 / OT-3).